An 838-amino-acid polypeptide reads, in one-letter code: G-protein coupled receptor-associated sorting protein 2 (838 aa).

Disordered stretches follow at residues 1–122 (MTGA…GARP), 218–292 (ASNE…SNPF), 349–368 (RFRH…RAQK), and 531–552 (LELS…PSPE). The span at 13–31 (KPEKKAGEEVIAGPEREND) shows a compositional bias: basic and acidic residues. Over residues 220–245 (NESGFWSADETSTASSFWTGEETSVR) the composition is skewed to polar residues. A compositionally biased stretch (basic residues) spans 255–271 (RSRHRAKHQTNPRSRPR). 2 positions are modified to phosphoserine: serine 282 and serine 284. Polar residues predominate over residues 542–552 (SLLQPDQPSPE).

It belongs to the GPRASP family. As to quaternary structure, interacts with cytoplasmic tails of a variety of G-protein coupled receptors such as muscarinic acetylcholine receptor M1/CHRM1 and calcitonin receptor/CALCR. Expressed in the brain.

May play a role in regulation of a variety of G-protein coupled receptors. The polypeptide is G-protein coupled receptor-associated sorting protein 2 (GPRASP2) (Homo sapiens (Human)).